Here is a 462-residue protein sequence, read N- to C-terminus: 3beta-hydroxysteroid dehydrogenase/Delta(5)-Delta(4) isomerase 1 (462 aa).

Residues 51–56, tyrosine 220, and lysine 224 each bind NAD(+); that span reads GGAGHL. Catalysis depends on lysine 224, which acts as the Proton donor. The next 2 membrane-spanning stretches (helical) occupy residues 321 to 341 and 428 to 448; these read VGTF…SSMI and VAVL…FTFW.

This sequence belongs to the 3-beta-HSD family. In terms of tissue distribution, expressed exclusively in the neuron-like XXX(L/R) cells through all four larval stages and becomes fainter in adults.

The protein localises to the membrane. It carries out the reaction a 3beta-hydroxy-Delta(5)-steroid + NAD(+) = a 3-oxo-Delta(5)-steroid + NADH + H(+). The catalysed reaction is cholesterol + NAD(+) = cholest-5-en-3-one + NADH + H(+). It catalyses the reaction a 3-oxo-Delta(5)-steroid = a 3-oxo-Delta(4)-steroid. The enzyme catalyses cholest-5-en-3-one = cholest-4-en-3-one. It participates in steroid hormone biosynthesis; dafachronic acid biosynthesis. Functionally, hydroxysteroid dehydrogenase involved in the biosynthesis of dafrachonic acids. Catalyzes the dehydrogenation of cholesterol or its derivatives and the isomerization of the double carbon bond on the sterol ring. Modifies sterols into a Delta(4)-3-keto-sterols such as cholest-4-en-3-one, precursor of Delta(4)-dafachronic acid. Contributes to the production of Delta(7)-dafachronic acid in the XXX cells. Dafachronic acids act as ligands and bind directly to the nuclear hormone receptor (NHR) daf-12 suppressing dauer formation and inducing reproductive growth. Acts in parallel to AKT-1 to promote reproductive development via DAF-16/FoxO and DAF-12. The polypeptide is 3beta-hydroxysteroid dehydrogenase/Delta(5)-Delta(4) isomerase 1 (Caenorhabditis elegans).